The primary structure comprises 499 residues: MADLANEEKPAIAPPVFVFQKDKGQKRSAGGSSPEGGEDSDREYGNYCPPVKRERTSSLTQFPPSQSEERSSGFRLKPPTLIHGQAPSAGLPSQKPKEQQRSVLRPAVLQAPQPKALSQTVPSSGTNGVSLLADCTGAVPAASPDTVARRSPSEAADEVCALEEKEPQKNESSNASEEEACEKKGPATQQAFVFGQNLRDRVKLINESVDEADMENAGHPSADTPTATNYFLQYISSSLENSTNSADASSNKFVFGQNMSERVLSPPKLNEVSSDANRENAAVESGSESSSQEATPEKESLAESAAAYTKATARKCLLEKVEVITGEEAESNVLQMQCKLFVFDKTSQSWVERGRGLLRLNDMASTDDGTLQSRLVMRTQGSLRLILNTKLWAQMQIDKASEKSIRITAMDTEDQGVKVFLISASSKDTGQLYAALHHRILALRSRVEQEQEAKMPVPEPGAAPSNEEDDSDDDDVLAPSGATAAGAGDEGDGQTTGST.

Basic and acidic residues predominate over residues 1-10 (MADLANEEKP). 3 disordered regions span residues 1-128 (MADL…GTNG), 141-196 (AASP…VFGQ), and 264-303 (LSPP…SLAE). The residue at position 2 (A2) is an N-acetylalanine. N6-acetyllysine is present on residues K9 and K21. Phosphoserine occurs at positions 32, 33, and 40. Residues 49–57 (PPVKRERTS) carry the Nuclear localization signal motif. T56 carries the post-translational modification Phosphothreonine. Composition is skewed to polar residues over residues 57–66 (SSLTQFPPSQ) and 116–128 (ALSQ…GTNG). The residue at position 58 (S58) is a Phosphoserine. 5 positions are modified to phosphoserine: S151, S265, S285, S287, and S304. A RanBD1 domain is found at 310-450 (KATARKCLLE…LALRSRVEQE (141 aa)). The segment at 447–499 (VEQEQEAKMPVPEPGAAPSNEEDDSDDDDVLAPSGATAAGAGDEGDGQTTGST) is disordered. Positions 466 to 476 (NEEDDSDDDDV) are enriched in acidic residues. S471 is subject to Phosphoserine. A compositionally biased stretch (low complexity) spans 481 to 499 (GATAAGAGDEGDGQTTGST).

In terms of assembly, interacts with CHC1 in a Ran-stimulated manner. Interacts with XPO1. Interacts (via its C-terminal R domain) with SMAD2 (dephosphorylated form via its MH1 and MH2 domains); the interaction results in the nuclear export of SMAD2 and termination of the TGF-beta signaling. Interacts (via its C-terminal R domain) with SMAD3 (dephosphorylated form via its MH1 domain); the interaction results in the nuclear export of SMAD3 and termination of the TGF-beta signaling. Phosphorylation at Ser-58 promotes its import into the nucleus.

Its subcellular location is the cytoplasm. It localises to the nucleus. Its function is as follows. Acts as a cofactor for XPO1/CRM1-mediated nuclear export, perhaps as export complex scaffolding protein. Bound to XPO1/CRM1, stabilizes the XPO1/CRM1-cargo interaction. In the absence of Ran-bound GTP prevents binding of XPO1/CRM1 to the nuclear pore complex. Binds to CHC1/RCC1 and increases the guanine nucleotide exchange activity of CHC1/RCC1. Recruits XPO1/CRM1 to CHC1/RCC1 in a Ran-dependent manner. Negative regulator of TGF-beta signaling through interaction with the R-SMAD proteins, SMAD2 and SMAD3, and mediating their nuclear export. This is Ran-binding protein 3 (RANBP3) from Macaca fascicularis (Crab-eating macaque).